Here is a 162-residue protein sequence, read N- to C-terminus: Shikimate kinase (162 aa).

Residue 11–16 participates in ATP binding; sequence GSGKSS. A Mg(2+)-binding site is contributed by serine 15. Residues aspartate 33, arginine 57, and glycine 80 each contribute to the substrate site. Arginine 116 is a binding site for ATP. Arginine 132 is a substrate binding site.

The protein belongs to the shikimate kinase family. In terms of assembly, monomer. Mg(2+) serves as cofactor.

Its subcellular location is the cytoplasm. The catalysed reaction is shikimate + ATP = 3-phosphoshikimate + ADP + H(+). The protein operates within metabolic intermediate biosynthesis; chorismate biosynthesis; chorismate from D-erythrose 4-phosphate and phosphoenolpyruvate: step 5/7. Functionally, catalyzes the specific phosphorylation of the 3-hydroxyl group of shikimic acid using ATP as a cosubstrate. The polypeptide is Shikimate kinase (Helicobacter pylori (strain Shi470)).